We begin with the raw amino-acid sequence, 659 residues long: WD repeat-containing protein 48 homolog (659 aa).

WD repeat units follow at residues 27-66 (RHRN…SQEP), 73-112 (HHND…CMST), 115-154 (THRD…ALTA), 166-205 (GSKD…KIAK), 208-247 (GHAE…CVQT), 250-289 (VHSE…NSVL), 292-331 (EERA…KLSF), and 337-376 (KGGA…KVED). The segment at 592–613 (ASTGNSNSSQNNSQSDANSEGS) is disordered. The span at 596 to 610 (NSNSSQNNSQSDANS) shows a compositional bias: low complexity.

This sequence belongs to the WD repeat WDR48 family. Catalytic component of the Usp12-46 deubiquitylase complex consisting of Usp12-46, Wdr20 and Uaf1; regulatory subunit that, together wtih Wdr20, stabilizes Usp12-46. The Usp12-46 deubiquitylase complex associates with arr/arrow; the interaction leads to deubiquitination and stabilization of arr/arrow.

Regulatory component of the Usp12-46 deubiquitylase complex. activates deubiquitination by increasing the catalytic turnover without increasing the affinity of deubiquitinating enzymes for the substrate. The complex deubiquitylates the wg/wingless-signaling receptor arr/arrow, which stabilizes the receptor and increases its concentration at the cell surface; this enhances the sensitivity of cells to wg/wingless-signal stimulation. This increases the amplitude and spatial range of the signaling response to the wg/wingless morphogen gradient, facilitating the precise concentration-dependent regulation of its target genes. Together with Wdr20 and Usp12-46 required for wg/wingless-mediated signaling in the wing imaginal disc and for wg/wingless-dependent regulation of intestinal stem cell proliferation. This is WD repeat-containing protein 48 homolog from Aedes aegypti (Yellowfever mosquito).